The chain runs to 235 residues: Iron-sulfur cluster co-chaperone protein HscB (235 aa).

Residues Cys41, Cys44, Cys58, and Cys61 each contribute to the a divalent metal cation site. A J domain is found at 72 to 144; that stretch reads DYFSLMDCNR…LSRGLYLLKL (73 aa).

This sequence belongs to the HscB family. As to quaternary structure, interacts with ISCU and HSPA9 to form an iron-sulfur transfer complex. Interacts with SDHAF1 (via the first LYR motif); the interaction recruits the iron-sulfur transfer complex composed of HSC20, HSPA9 and ISCU and mediates the incorporation of iron-sulfur clusters into SDHB which also interacts with HSC20. Interacts with the cytoplasmic form of ISCU and with CIA complex member CIAO1 (via LYR motif). In terms of assembly, homodimer. Interacts with ISCU (cytoplasmic form); this interaction stabilizes the (Fe-S) clusters on ISCU. Interacts with the CIA complex member CIAO1 (via LYR motif). In terms of tissue distribution, expressed in lung, brain, stomach, spleen, ovary, testis, liver, muscle and heart.

It localises to the cytoplasm. It is found in the mitochondrion. It functions in the pathway cofactor biosynthesis; iron-sulfur cluster biosynthesis. In terms of biological role, acts as a co-chaperone in iron-sulfur cluster assembly in mitochondria. Required for incorporation of iron-sulfur clusters into SDHB, the iron-sulfur protein subunit of succinate dehydrogenase that is involved in complex II of the mitochondrial electron transport chain. Recruited to SDHB by interaction with SDHAF1 which first binds SDHB and then recruits the iron-sulfur transfer complex formed by HSC20, HSPA9 and ISCU through direct binding to HSC20. Plays an essential role in hematopoiesis. Acts as a co-chaperone in iron-sulfur cluster assembly in the cytoplasm. Also mediates complex formation between components of the cytosolic iron-sulfur biogenesis pathway and the CIA targeting complex composed of CIAO1, DIPK1B/FAM69B and MMS19 by binding directly to the scaffold protein ISCU and to CIAO1. This facilitates iron-sulfur cluster insertion into a number of cytoplasmic and nuclear proteins including POLD1, ELP3, DPYD and PPAT. The polypeptide is Iron-sulfur cluster co-chaperone protein HscB (Homo sapiens (Human)).